The following is a 341-amino-acid chain: L-threonine 3-dehydrogenase (341 aa).

C38 lines the Zn(2+) pocket. Residues T40 and H43 each act as charge relay system in the active site. Zn(2+)-binding residues include H63, E64, C93, C96, C99, and C107. NAD(+) is bound by residues I175, D195, R200, L262–I264, and I286–Y287.

This sequence belongs to the zinc-containing alcohol dehydrogenase family. Homotetramer. Requires Zn(2+) as cofactor.

Its subcellular location is the cytoplasm. It carries out the reaction L-threonine + NAD(+) = (2S)-2-amino-3-oxobutanoate + NADH + H(+). The protein operates within amino-acid degradation; L-threonine degradation via oxydo-reductase pathway; glycine from L-threonine: step 1/2. Its function is as follows. Catalyzes the NAD(+)-dependent oxidation of L-threonine to 2-amino-3-ketobutyrate. This Shigella dysenteriae serotype 1 (strain Sd197) protein is L-threonine 3-dehydrogenase.